The sequence spans 331 residues: POU domain, class 4, transcription factor 3 (331 aa).

Residues 81-97 (TSSSSTVPISHPSSNLP) show a composition bias toward low complexity. Positions 81–108 (TSSSSTVPISHPSSNLPSHHHHHLSHQT) are disordered. The POU-specific domain maps to 172–249 (DVESDPRELE…VLQAWLEEAE (78 aa)). Residues 267 to 326 (RKRKRTSIAAPEKRSLEAYFAIQPRPSSEKIAAIAEKLDLKKNVVRVWFCNQRQKQKRMK) constitute a DNA-binding region (homeobox).

It belongs to the POU transcription factor family. Class-4 subfamily. As to quaternary structure, interaction with ISL1. As to expression, expressed in the nervous system. Expressed in the otic vesicle during embryogenesis. Expressed in the adult retina in a subset of retinal ganglion cells (RGCs), and at a lower level in the adult tectum. Not expressed in the adult olfactory bulb.

The protein resides in the nucleus. It localises to the cytoplasm. In terms of biological role, acts as a transcriptional activator. Acts by binding to sequences related to the consensus octamer motif 5'-ATGCAAAT-3' in the regulatory regions of its target genes. May play a role in specifying terminally differentiated neuronal phenotypes. The protein is POU domain, class 4, transcription factor 3 (pou4f3) of Danio rerio (Zebrafish).